A 226-amino-acid polypeptide reads, in one-letter code: Transmembrane emp24 domain-containing protein 5 (226 aa).

The signal sequence occupies residues 1–24; the sequence is MGDKTWLPFPVVLLAALLLPRAAG. Topologically, residues 25 to 193 are lumenal; it reads FTPSLDSDFT…IQESNFDRVN (169 aa). Positions 42 to 123 constitute a GOLD domain; that stretch reads KECFYQPMPL…EKVIFFELIL (82 aa). Residues 194–214 form a helical membrane-spanning segment; it reads FWSMVNLVVMVVVSAIQVYML. The Cytoplasmic portion of the chain corresponds to 215–226; sequence KSLFEDKRKSRT. The Mediates export from ER motif lies at 217 to 218; that stretch reads LF.

It belongs to the EMP24/GP25L family. In terms of assembly, interacts with TMED9 and TMED10.

It is found in the endoplasmic reticulum membrane. The protein localises to the golgi apparatus. Its subcellular location is the cis-Golgi network membrane. It localises to the endoplasmic reticulum-Golgi intermediate compartment membrane. Its function is as follows. Potential role in vesicular protein trafficking, mainly in the early secretory pathway. Required for the maintenance of the Golgi apparatus; involved in protein exchange between Golgi stacks during assembly. Probably not required for COPI-vesicle-mediated retrograde transport. This is Transmembrane emp24 domain-containing protein 5 (TMED5) from Bos taurus (Bovine).